Reading from the N-terminus, the 468-residue chain is 6-phospho-beta-galactosidase (468 aa).

5 residues coordinate D-galactose 6-phosphate: Gln19, His116, Asn159, Glu160, and Asn297. Glu160 functions as the Proton donor in the catalytic mechanism. Catalysis depends on Glu375, which acts as the Nucleophile. 4 residues coordinate D-galactose 6-phosphate: Ser428, Trp429, Lys435, and Tyr437.

Belongs to the glycosyl hydrolase 1 family.

The enzyme catalyses a 6-phospho-beta-D-galactoside + H2O = D-galactose 6-phosphate + an alcohol. Its pathway is carbohydrate metabolism; lactose degradation; D-galactose 6-phosphate and beta-D-glucose from lactose 6-phosphate: step 1/1. The polypeptide is 6-phospho-beta-galactosidase (Streptococcus pyogenes serotype M2 (strain MGAS10270)).